Consider the following 259-residue polypeptide: Protein GrpE (259 aa).

Disordered regions lie at residues 1–74 and 228–259; these read MNSD…IKGS and PGPK…KDEN. Over residues 17–40 the composition is skewed to low complexity; sequence SSQNNPSENSVSSPNSNESVNQVE. Polar residues-rich tracts occupy residues 56–73 and 240–253; these read VDTA…NIKG and QSAS…SVDG.

Belongs to the GrpE family. Homodimer.

The protein localises to the cytoplasm. Functionally, participates actively in the response to hyperosmotic and heat shock by preventing the aggregation of stress-denatured proteins, in association with DnaK and GrpE. It is the nucleotide exchange factor for DnaK and may function as a thermosensor. Unfolded proteins bind initially to DnaJ; upon interaction with the DnaJ-bound protein, DnaK hydrolyzes its bound ATP, resulting in the formation of a stable complex. GrpE releases ADP from DnaK; ATP binding to DnaK triggers the release of the substrate protein, thus completing the reaction cycle. Several rounds of ATP-dependent interactions between DnaJ, DnaK and GrpE are required for fully efficient folding. The sequence is that of Protein GrpE from Prochlorococcus marinus (strain NATL2A).